Consider the following 524-residue polypeptide: Bifunctional purine biosynthesis protein PurH (524 aa).

In terms of domain architecture, MGS-like spans 1 to 149; it reads MSDPLIKRAL…KNNESVTVLT (149 aa).

The protein belongs to the PurH family.

It catalyses the reaction (6R)-10-formyltetrahydrofolate + 5-amino-1-(5-phospho-beta-D-ribosyl)imidazole-4-carboxamide = 5-formamido-1-(5-phospho-D-ribosyl)imidazole-4-carboxamide + (6S)-5,6,7,8-tetrahydrofolate. The enzyme catalyses IMP + H2O = 5-formamido-1-(5-phospho-D-ribosyl)imidazole-4-carboxamide. Its pathway is purine metabolism; IMP biosynthesis via de novo pathway; 5-formamido-1-(5-phospho-D-ribosyl)imidazole-4-carboxamide from 5-amino-1-(5-phospho-D-ribosyl)imidazole-4-carboxamide (10-formyl THF route): step 1/1. The protein operates within purine metabolism; IMP biosynthesis via de novo pathway; IMP from 5-formamido-1-(5-phospho-D-ribosyl)imidazole-4-carboxamide: step 1/1. The polypeptide is Bifunctional purine biosynthesis protein PurH (Chlorobium luteolum (strain DSM 273 / BCRC 81028 / 2530) (Pelodictyon luteolum)).